The chain runs to 107 residues: Phosphoribosyl-ATP pyrophosphatase (107 aa).

The protein belongs to the PRA-PH family.

Its subcellular location is the cytoplasm. It catalyses the reaction 1-(5-phospho-beta-D-ribosyl)-ATP + H2O = 1-(5-phospho-beta-D-ribosyl)-5'-AMP + diphosphate + H(+). Its pathway is amino-acid biosynthesis; L-histidine biosynthesis; L-histidine from 5-phospho-alpha-D-ribose 1-diphosphate: step 2/9. The sequence is that of Phosphoribosyl-ATP pyrophosphatase from Zymomonas mobilis subsp. mobilis (strain ATCC 31821 / ZM4 / CP4).